Reading from the N-terminus, the 105-residue chain is UPF0145 protein Mevan_1624 (105 aa).

The protein belongs to the UPF0145 family.

This is UPF0145 protein Mevan_1624 from Methanococcus vannielii (strain ATCC 35089 / DSM 1224 / JCM 13029 / OCM 148 / SB).